Consider the following 1360-residue polypeptide: DNA-directed RNA polymerase subunit beta (1360 aa).

This sequence belongs to the RNA polymerase beta chain family. The RNAP catalytic core consists of 2 alpha, 1 beta, 1 beta' and 1 omega subunit. When a sigma factor is associated with the core the holoenzyme is formed, which can initiate transcription.

The catalysed reaction is RNA(n) + a ribonucleoside 5'-triphosphate = RNA(n+1) + diphosphate. Its function is as follows. DNA-dependent RNA polymerase catalyzes the transcription of DNA into RNA using the four ribonucleoside triphosphates as substrates. The chain is DNA-directed RNA polymerase subunit beta from Teredinibacter turnerae (strain ATCC 39867 / T7901).